The primary structure comprises 537 residues: Cytochrome P450 4F6 (537 aa).

Cysteine 468 serves as a coordination point for heme.

The protein belongs to the cytochrome P450 family. It depends on heme as a cofactor. In terms of tissue distribution, high expression in liver and kidney. Lower expression in brain.

It localises to the endoplasmic reticulum membrane. Its subcellular location is the microsome membrane. The enzyme catalyses an organic molecule + reduced [NADPH--hemoprotein reductase] + O2 = an alcohol + oxidized [NADPH--hemoprotein reductase] + H2O + H(+). This chain is Cytochrome P450 4F6 (Cyp4f6), found in Rattus norvegicus (Rat).